Here is a 507-residue protein sequence, read N- to C-terminus: Maturase K (507 aa).

This sequence belongs to the intron maturase 2 family. MatK subfamily.

It localises to the plastid. Its subcellular location is the chloroplast. In terms of biological role, usually encoded in the trnK tRNA gene intron. Probably assists in splicing its own and other chloroplast group II introns. This chain is Maturase K, found in Liriodendron tulipifera (Tuliptree).